We begin with the raw amino-acid sequence, 201 residues long: Holliday junction branch migration complex subunit RuvA (201 aa).

The tract at residues 1 to 64 (MFAYIKGVLA…EFSHTLYGFL (64 aa)) is domain I. Positions 65–143 (SYQERDIFEI…AIGHLDTSDH (79 aa)) are domain II. Positions 144 to 153 (IEPLTQDPKS) are flexible linker. Positions 153-201 (SKSVQDAMLALINLGYNQTTAQKAIKQGMKELPEEIDLAQLITVALKHV) are domain III.

The protein belongs to the RuvA family. In terms of assembly, homotetramer. Forms an RuvA(8)-RuvB(12)-Holliday junction (HJ) complex. HJ DNA is sandwiched between 2 RuvA tetramers; dsDNA enters through RuvA and exits via RuvB. An RuvB hexamer assembles on each DNA strand where it exits the tetramer. Each RuvB hexamer is contacted by two RuvA subunits (via domain III) on 2 adjacent RuvB subunits; this complex drives branch migration. In the full resolvosome a probable DNA-RuvA(4)-RuvB(12)-RuvC(2) complex forms which resolves the HJ.

It localises to the cytoplasm. Functionally, the RuvA-RuvB-RuvC complex processes Holliday junction (HJ) DNA during genetic recombination and DNA repair, while the RuvA-RuvB complex plays an important role in the rescue of blocked DNA replication forks via replication fork reversal (RFR). RuvA specifically binds to HJ cruciform DNA, conferring on it an open structure. The RuvB hexamer acts as an ATP-dependent pump, pulling dsDNA into and through the RuvAB complex. HJ branch migration allows RuvC to scan DNA until it finds its consensus sequence, where it cleaves and resolves the cruciform DNA. This chain is Holliday junction branch migration complex subunit RuvA, found in Protochlamydia amoebophila (strain UWE25).